Here is a 404-residue protein sequence, read N- to C-terminus: Trigger factor (404 aa).

One can recognise a PPIase FKBP-type domain in the interval K160–P225.

The protein belongs to the FKBP-type PPIase family. Tig subfamily.

It localises to the cytoplasm. It catalyses the reaction [protein]-peptidylproline (omega=180) = [protein]-peptidylproline (omega=0). Involved in protein export. Acts as a chaperone by maintaining the newly synthesized protein in an open conformation. Functions as a peptidyl-prolyl cis-trans isomerase. This is Trigger factor from Thermus thermophilus (strain ATCC BAA-163 / DSM 7039 / HB27).